Reading from the N-terminus, the 462-residue chain is Chromosomal replication initiator protein DnaA (462 aa).

The segment at 1-86 is domain I, interacts with DnaA modulators; that stretch reads MSLSLWQQCL…EVGNKPVSQN (86 aa). The tract at residues 86 to 125 is domain II; that stretch reads NDSPPQRVVTHTPVAPAPQNTSVRPSWDNTAVQPELSYRS. Positions 126–342 are domain III, AAA+ region; that stretch reads NVNPKHTFDN…GALNRVIANA (217 aa). ATP contacts are provided by G170, G172, K173, and T174. Residues 343 to 462 form a domain IV, binds dsDNA region; that stretch reads NFTGRAITID…FSNLIRTLSS (120 aa).

Belongs to the DnaA family. In terms of assembly, oligomerizes as a right-handed, spiral filament on DNA at oriC.

The protein localises to the cytoplasm. Functionally, plays an essential role in the initiation and regulation of chromosomal replication. ATP-DnaA binds to the origin of replication (oriC) to initiate formation of the DNA replication initiation complex once per cell cycle. Binds the DnaA box (a 9 base pair repeat at the origin) and separates the double-stranded (ds)DNA. Forms a right-handed helical filament on oriC DNA; dsDNA binds to the exterior of the filament while single-stranded (ss)DNA is stabiized in the filament's interior. The ATP-DnaA-oriC complex binds and stabilizes one strand of the AT-rich DNA unwinding element (DUE), permitting loading of DNA polymerase. After initiation quickly degrades to an ADP-DnaA complex that is not apt for DNA replication. Binds acidic phospholipids. The protein is Chromosomal replication initiator protein DnaA of Photorhabdus laumondii subsp. laumondii (strain DSM 15139 / CIP 105565 / TT01) (Photorhabdus luminescens subsp. laumondii).